The primary structure comprises 241 residues: DNA repair protein RecO (241 aa).

This sequence belongs to the RecO family.

In terms of biological role, involved in DNA repair and RecF pathway recombination. The protein is DNA repair protein RecO of Xanthomonas campestris pv. campestris (strain B100).